The sequence spans 371 residues: Ferrochelatase (371 aa).

Fe cation is bound by residues histidine 218 and glutamate 299.

Belongs to the ferrochelatase family.

The protein resides in the cytoplasm. It carries out the reaction heme b + 2 H(+) = protoporphyrin IX + Fe(2+). It functions in the pathway porphyrin-containing compound metabolism; protoheme biosynthesis; protoheme from protoporphyrin-IX: step 1/1. Its function is as follows. Catalyzes the ferrous insertion into protoporphyrin IX. This chain is Ferrochelatase, found in Ralstonia pickettii (strain 12J).